Consider the following 254-residue polypeptide: Adenosylcobinamide-GDP ribazoletransferase (254 aa).

The next 7 helical transmembrane spans lie at 27-47 (SSLY…VLFA), 50-70 (GMGA…GFIL), 104-124 (VGSF…ICLL), 131-151 (AYGM…LLAA), 170-190 (AGWP…FVLL), 194-214 (VVPS…VGWL), and 233-253 (LVEI…FSAI).

Belongs to the CobS family. Mg(2+) is required as a cofactor.

Its subcellular location is the cell inner membrane. The enzyme catalyses alpha-ribazole + adenosylcob(III)inamide-GDP = adenosylcob(III)alamin + GMP + H(+). It carries out the reaction alpha-ribazole 5'-phosphate + adenosylcob(III)inamide-GDP = adenosylcob(III)alamin 5'-phosphate + GMP + H(+). The protein operates within cofactor biosynthesis; adenosylcobalamin biosynthesis; adenosylcobalamin from cob(II)yrinate a,c-diamide: step 7/7. Its function is as follows. Joins adenosylcobinamide-GDP and alpha-ribazole to generate adenosylcobalamin (Ado-cobalamin). Also synthesizes adenosylcobalamin 5'-phosphate from adenosylcobinamide-GDP and alpha-ribazole 5'-phosphate. The polypeptide is Adenosylcobinamide-GDP ribazoletransferase (Chlorobaculum parvum (strain DSM 263 / NCIMB 8327) (Chlorobium vibrioforme subsp. thiosulfatophilum)).